The sequence spans 124 residues: Protein YobA (124 aa).

A signal peptide spans 1-26 (MASTARSLRYALAILTTSLVTPSVWA). 2 residues coordinate Cu cation: H27 and H113.

The protein belongs to the CopC family.

Its subcellular location is the periplasm. In Escherichia coli O6:H1 (strain CFT073 / ATCC 700928 / UPEC), this protein is Protein YobA (yobA).